A 430-amino-acid polypeptide reads, in one-letter code: Corticosteroid-binding globulin (430 aa).

Positions 1 to 22 (MLLTLYTCLLWLSTSGLWTIQA) are cleaved as a signal peptide. N-linked (GlcNAc...) asparagine glycans are attached at residues Asn119, Asn175, and Asn243. Gln253 is a binding site for cortisol. An N-linked (GlcNAc...) asparagine glycan is attached at Asn259. Residue Gln285 coordinates cortisol. N-linked (GlcNAc...) asparagine glycosylation is present at Asn326. Trp392 contacts cortisol.

It belongs to the serpin family. As to expression, expressed by the liver; secreted in plasma.

Its subcellular location is the secreted. Major transport protein for glucocorticoids and progestins in the blood of almost all vertebrate species. The protein is Corticosteroid-binding globulin (SERPINA6) of Ovis aries (Sheep).